We begin with the raw amino-acid sequence, 225 residues long: N-(5'-phosphoribosyl)anthranilate isomerase (225 aa).

The protein belongs to the TrpF family.

The enzyme catalyses N-(5-phospho-beta-D-ribosyl)anthranilate = 1-(2-carboxyphenylamino)-1-deoxy-D-ribulose 5-phosphate. It functions in the pathway amino-acid biosynthesis; L-tryptophan biosynthesis; L-tryptophan from chorismate: step 3/5. This Nitrobacter winogradskyi (strain ATCC 25391 / DSM 10237 / CIP 104748 / NCIMB 11846 / Nb-255) protein is N-(5'-phosphoribosyl)anthranilate isomerase.